Reading from the N-terminus, the 557-residue chain is Potassium-transporting ATPase potassium-binding subunit (557 aa).

10 helical membrane passes run 4–24 (LGAG…VHVP), 61–81 (TYAL…YAFL), 131–151 (GLTV…VALV), 174–194 (LRVL…TGVV), 253–273 (LEVF…GTLV), 280–300 (LAVL…TTWA), 375–395 (GLYG…LMVG), 412–432 (CAAL…AVAL), 483–503 (LAIW…AGAF), and 528–548 (LAVV…LGPI).

Belongs to the KdpA family. As to quaternary structure, the system is composed of three essential subunits: KdpA, KdpB and KdpC.

Its subcellular location is the cell membrane. Part of the high-affinity ATP-driven potassium transport (or Kdp) system, which catalyzes the hydrolysis of ATP coupled with the electrogenic transport of potassium into the cytoplasm. This subunit binds the extracellular potassium ions and delivers the ions to the membrane domain of KdpB through an intramembrane tunnel. This Kineococcus radiotolerans (strain ATCC BAA-149 / DSM 14245 / SRS30216) protein is Potassium-transporting ATPase potassium-binding subunit.